Reading from the N-terminus, the 510-residue chain is Bifunctional purine biosynthesis protein PurH (510 aa).

The 143-residue stretch at 1 to 143 (MTKRALISVS…KNHDAVLVLV (143 aa)) folds into the MGS-like domain.

Belongs to the PurH family.

The enzyme catalyses (6R)-10-formyltetrahydrofolate + 5-amino-1-(5-phospho-beta-D-ribosyl)imidazole-4-carboxamide = 5-formamido-1-(5-phospho-D-ribosyl)imidazole-4-carboxamide + (6S)-5,6,7,8-tetrahydrofolate. It catalyses the reaction IMP + H2O = 5-formamido-1-(5-phospho-D-ribosyl)imidazole-4-carboxamide. Its pathway is purine metabolism; IMP biosynthesis via de novo pathway; 5-formamido-1-(5-phospho-D-ribosyl)imidazole-4-carboxamide from 5-amino-1-(5-phospho-D-ribosyl)imidazole-4-carboxamide (10-formyl THF route): step 1/1. The protein operates within purine metabolism; IMP biosynthesis via de novo pathway; IMP from 5-formamido-1-(5-phospho-D-ribosyl)imidazole-4-carboxamide: step 1/1. The chain is Bifunctional purine biosynthesis protein PurH from Deinococcus radiodurans (strain ATCC 13939 / DSM 20539 / JCM 16871 / CCUG 27074 / LMG 4051 / NBRC 15346 / NCIMB 9279 / VKM B-1422 / R1).